A 405-amino-acid chain; its full sequence is Phosphopentomutase (405 aa).

Mn(2+) is bound by residues Asp10, Asp303, His308, Asp344, His345, and His356.

It belongs to the phosphopentomutase family. The cofactor is Mn(2+).

The protein localises to the cytoplasm. The enzyme catalyses 2-deoxy-alpha-D-ribose 1-phosphate = 2-deoxy-D-ribose 5-phosphate. It catalyses the reaction alpha-D-ribose 1-phosphate = D-ribose 5-phosphate. It participates in carbohydrate degradation; 2-deoxy-D-ribose 1-phosphate degradation; D-glyceraldehyde 3-phosphate and acetaldehyde from 2-deoxy-alpha-D-ribose 1-phosphate: step 1/2. Its function is as follows. Isomerase that catalyzes the conversion of deoxy-ribose 1-phosphate (dRib-1-P) and ribose 1-phosphate (Rib-1-P) to deoxy-ribose 5-phosphate (dRib-5-P) and ribose 5-phosphate (Rib-5-P), respectively. The protein is Phosphopentomutase of Shewanella sediminis (strain HAW-EB3).